Reading from the N-terminus, the 494-residue chain is GPI alpha-1,6-mannosyltransferase 2 (494 aa).

Residues 1 to 13 (MWSLDPSQKEVLR) are Cytoplasmic-facing. Residues 14 to 34 (FAVSCRILTLMLQALFNIIIP) form a helical membrane-spanning segment. At 35–77 (DHHADAFSPPRLASSCSVDQLVEGLLGGLSRWDAEHFLFIAEH) the chain is on the lumenal side. Residues 78–98 (GYLYEHNFAFFPGFPLALLMG) traverse the membrane as a helical segment. Residues 99–113 (TELLRPLQGLLSQRS) lie on the Cytoplasmic side of the membrane. The chain crosses the membrane as a helical span at residues 114–134 (CLLVSVALLNFLFSVLAAVTL). Residues 135–136 (HD) are Lumenal-facing. Residues 137–157 (LGCLVLGCPRQAFYAAMLFCL) form a helical membrane-spanning segment. Over 158–161 (SPAN) the chain is Cytoplasmic. Residues 162-182 (VFLAAGYSEALFAFLTFSAMG) traverse the membrane as a helical segment. The Lumenal portion of the chain corresponds to 183 to 192 (QLERGRSWAS). A helical membrane pass occupies residues 193 to 213 (GLLFALATGVRSNGLVSVGFL). The Cytoplasmic portion of the chain corresponds to 214–234 (LHAQCRGFFSSLVVLNPLKPL). A helical membrane pass occupies residues 235-255 (FKLMASLCLSVLTVSLPFALF). The Lumenal segment spans residues 256-327 (QYYAYTQFCL…RYYELRQVPN (72 aa)). The chain crosses the membrane as a helical span at residues 328–348 (FLLATPVAVLVVWAAWTYVTT). At 349–379 (HPWLCLTLGLRRSKDSKKTLEKPHPGFLSPK) the chain is on the cytoplasmic side. A helical membrane pass occupies residues 380 to 400 (VFVYLVHAAGLLLFGSLCMHV). Residues 401–470 (QVLTRLLCSS…NWRACSPVTR (70 aa)) lie on the Lumenal side of the membrane. A helical membrane pass occupies residues 471–491 (CILGYFLTYWLLGLLLHCNFL). Residues 492–494 (PWT) lie on the Cytoplasmic side of the membrane.

The protein belongs to the PIGV family. Not N-glycosylated.

Its subcellular location is the endoplasmic reticulum membrane. It functions in the pathway glycolipid biosynthesis; glycosylphosphatidylinositol-anchor biosynthesis. Its function is as follows. Alpha-1,6-mannosyltransferase that catalyzes the transfer of the second mannose, via an alpha-1,6 bond, from a dolichol-phosphate-mannose (Dol-P-Man) to the alpha-D-Man-(1-&gt;4)-alpha-D-GlcN-(1-&gt;6)-(1-radyl,2-acyl-sn-glycero-3-phospho)-2-acyl-inositol intermediate to generate an alpha-D-Man-(1-&gt;6)-alpha-D-Man-(1-&gt;4)-alpha-D-GlcN-(1-&gt;6)-(1-radyl,2-acyl-sn-glycero-3-phospho)-2-acyl-inositol and participates in the seventh step of the glycosylphosphatidylinositol-anchor biosynthesis. Also transfers the second mannose on a 2-PEtn-alpha-D-Man-(1-&gt;4)-alpha-D-GlcN-(1-&gt;6)-(1-radyl,2-acyl-sn-glycero-3-phospho)-2-acyl-inositol. The sequence is that of GPI alpha-1,6-mannosyltransferase 2 from Cricetulus griseus (Chinese hamster).